A 400-amino-acid polypeptide reads, in one-letter code: Mu-type opioid receptor (400 aa).

Residues 1–68 lie on the Extracellular side of the membrane; sequence MDSSAAPTNA…CPPTGSPSMI (68 aa). 5 N-linked (GlcNAc...) asparagine glycosylation sites follow: Asn9, Asn12, Asn33, Asn40, and Asn48. Residues 69–93 form a helical membrane-spanning segment; it reads TAITIMALYSIVCVVGLFGNFLVMY. Residues 94-106 lie on the Cytoplasmic side of the membrane; it reads VIVRYTKMKTATN. Residues 107–131 form a helical membrane-spanning segment; that stretch reads IYIFNLALADALATSTLPFQSVNYL. Over 132–142 the chain is Extracellular; the sequence is MGTWPFGTILC. Cys142 and Cys219 are oxidised to a cystine. Residues 143 to 165 form a helical membrane-spanning segment; it reads KIVISIDYYNMFTSIFTLCTMSV. At 166 to 185 the chain is on the cytoplasmic side; the sequence is DRYIAVCHPVKALDFRTPRN. Phosphotyrosine is present on Tyr168. A helical membrane pass occupies residues 186-207; that stretch reads AKIINVCNWILSSAIGLPVMFM. Topologically, residues 208-230 are extracellular; sequence ATTKYRQGSIDCTLTFSHPTWYW. A helical transmembrane segment spans residues 231–255; the sequence is ENLLKICVFIFAFIMPVLIITVCYG. Over 256–279 the chain is Cytoplasmic; that stretch reads LMILRLKSVRMLSGSKEKDRNLRR. The chain crosses the membrane as a helical span at residues 280 to 306; sequence ITRMVLVVVAVFIVCWTPIHIYVIIKA. Residues 307–314 are Extracellular-facing; sequence LVTIPETT. Residues 315-338 form a helical membrane-spanning segment; the sequence is FQTVSWHFCIALGYTNSCLNPVLY. Positions 334–338 match the NPxxY; plays a role in stabilizing the activated conformation of the receptor motif; sequence NPVLY. The Cytoplasmic portion of the chain corresponds to 339–400; sequence AFLDENFKRC…NLEAETAPLP (62 aa). A lipid anchor (S-palmitoyl cysteine) is attached at Cys353. Ser365 carries the post-translational modification Phosphoserine. Phosphothreonine is present on Thr372. Position 377 is a phosphoserine (Ser377). Residue Thr396 is modified to Phosphothreonine.

This sequence belongs to the G-protein coupled receptor 1 family. As to quaternary structure, forms homooligomers and heterooligomers with other GPCRs, such as OPRD1, OPRK1, OPRL1, NPFFR2, ADRA2A, SSTR2, CNR1 and CCR5 (probably in dimeric forms). Interacts with heterotrimeric G proteins; interaction with a heterotrimeric complex containing GNAI1, GNB1 and GNG2 stabilizes the active conformation of the receptor and increases its affinity for endomorphin-2, the synthetic opioid peptide DAMGO and for morphinan agonists. Interacts with PPL; the interaction disrupts agonist-mediated G-protein activation. Interacts (via C-terminus) with DNAJB4 (via C-terminus). Interacts with calmodulin; the interaction inhibits the constitutive activity of OPRM1; it abolishes basal and attenuates agonist-stimulated G-protein coupling. Interacts with FLNA, PLD2, RANBP9 and WLS and GPM6A. Interacts with RTP4. Interacts with SYP and GNAS. Interacts with RGS9, RGS17, RGS20, RGS4, PPP1R9B and HINT1. Phosphorylated. Differentially phosphorylated in basal and agonist-induced conditions. Agonist-mediated phosphorylation modulates receptor internalization. Phosphorylated by GRK2 in a agonist-dependent manner. Phosphorylation at Tyr-168 requires receptor activation, is dependent on non-receptor protein tyrosine kinase Src and results in a decrease in agonist efficacy by reducing G-protein coupling efficiency. Phosphorylated on tyrosine residues; the phosphorylation is involved in agonist-induced G-protein-independent receptor down-regulation. Phosphorylation at Ser-377 is involved in G-protein-dependent but not beta-arrestin-dependent activation of the ERK pathway. In terms of processing, ubiquitinated. A basal ubiquitination seems not to be related to degradation. Ubiquitination is increased upon formation of OPRM1:OPRD1 oligomers leading to proteasomal degradation; the ubiquitination is diminished by RTP4. Expressed in brain. Isoform 16 and isoform 17 are detected in brain.

It is found in the cell membrane. The protein resides in the cell projection. Its subcellular location is the axon. The protein localises to the perikaryon. It localises to the dendrite. It is found in the endosome. The protein resides in the cytoplasm. Receptor for endogenous opioids such as beta-endorphin and endomorphin. Receptor for natural and synthetic opioids including morphine, heroin, DAMGO, fentanyl, etorphine, buprenorphin and methadone. Also activated by enkephalin peptides, such as Met-enkephalin or Met-enkephalin-Arg-Phe, with higher affinity for Met-enkephalin-Arg-Phe. Agonist binding to the receptor induces coupling to an inactive GDP-bound heterotrimeric G-protein complex and subsequent exchange of GDP for GTP in the G-protein alpha subunit leading to dissociation of the G-protein complex with the free GTP-bound G-protein alpha and the G-protein beta-gamma dimer activating downstream cellular effectors. The agonist- and cell type-specific activity is predominantly coupled to pertussis toxin-sensitive G(i) and G(o) G alpha proteins, GNAI1, GNAI2, GNAI3 and GNAO1 isoforms Alpha-1 and Alpha-2, and to a lesser extent to pertussis toxin-insensitive G alpha proteins GNAZ and GNA15. They mediate an array of downstream cellular responses, including inhibition of adenylate cyclase activity and both N-type and L-type calcium channels, activation of inward rectifying potassium channels, mitogen-activated protein kinase (MAPK), phospholipase C (PLC), phosphoinositide/protein kinase (PKC), phosphoinositide 3-kinase (PI3K) and regulation of NF-kappa-B. Also couples to adenylate cyclase stimulatory G alpha proteins. The selective temporal coupling to G-proteins and subsequent signaling can be regulated by RGSZ proteins, such as RGS9, RGS17 and RGS4. Phosphorylation by members of the GPRK subfamily of Ser/Thr protein kinases and association with beta-arrestins is involved in short-term receptor desensitization. Beta-arrestins associate with the GPRK-phosphorylated receptor and uncouple it from the G-protein thus terminating signal transduction. The phosphorylated receptor is internalized through endocytosis via clathrin-coated pits which involves beta-arrestins. The activation of the ERK pathway occurs either in a G-protein-dependent or a beta-arrestin-dependent manner and is regulated by agonist-specific receptor phosphorylation. Acts as a class A G-protein coupled receptor (GPCR) which dissociates from beta-arrestin at or near the plasma membrane and undergoes rapid recycling. Receptor down-regulation pathways are varying with the agonist and occur dependent or independent of G-protein coupling. Endogenous ligands induce rapid desensitization, endocytosis and recycling. Heterooligomerization with other GPCRs can modulate agonist binding, signaling and trafficking properties. In terms of biological role, couples to GNAS and is proposed to be involved in excitatory effects. Functionally, does not bind agonists but may act through oligomerization with binding-competent OPRM1 isoforms and reduce their ligand binding activity. This Homo sapiens (Human) protein is Mu-type opioid receptor (OPRM1).